We begin with the raw amino-acid sequence, 247 residues long: Ubiquinone biosynthesis O-methyltransferase (247 aa).

S-adenosyl-L-methionine contacts are provided by Arg39, Gly70, Asp91, and Met134.

This sequence belongs to the methyltransferase superfamily. UbiG/COQ3 family.

The enzyme catalyses a 3-demethylubiquinol + S-adenosyl-L-methionine = a ubiquinol + S-adenosyl-L-homocysteine + H(+). It catalyses the reaction a 3-(all-trans-polyprenyl)benzene-1,2-diol + S-adenosyl-L-methionine = a 2-methoxy-6-(all-trans-polyprenyl)phenol + S-adenosyl-L-homocysteine + H(+). Its pathway is cofactor biosynthesis; ubiquinone biosynthesis. In terms of biological role, O-methyltransferase that catalyzes the 2 O-methylation steps in the ubiquinone biosynthetic pathway. This is Ubiquinone biosynthesis O-methyltransferase from Cereibacter sphaeroides (strain ATCC 17023 / DSM 158 / JCM 6121 / CCUG 31486 / LMG 2827 / NBRC 12203 / NCIMB 8253 / ATH 2.4.1.) (Rhodobacter sphaeroides).